Reading from the N-terminus, the 362-residue chain is 3-dehydroquinate synthase (362 aa).

NAD(+) is bound by residues 71–76 (DGEQYK), 105–109 (GVIGD), 129–130 (TT), Lys142, Lys151, and 169–172 (CLKT). Zn(2+)-binding residues include Glu184, His247, and His264.

The protein belongs to the sugar phosphate cyclases superfamily. Dehydroquinate synthase family. It depends on Co(2+) as a cofactor. Requires Zn(2+) as cofactor. NAD(+) serves as cofactor.

The protein resides in the cytoplasm. The enzyme catalyses 7-phospho-2-dehydro-3-deoxy-D-arabino-heptonate = 3-dehydroquinate + phosphate. Its pathway is metabolic intermediate biosynthesis; chorismate biosynthesis; chorismate from D-erythrose 4-phosphate and phosphoenolpyruvate: step 2/7. Its function is as follows. Catalyzes the conversion of 3-deoxy-D-arabino-heptulosonate 7-phosphate (DAHP) to dehydroquinate (DHQ). This is 3-dehydroquinate synthase from Salmonella schwarzengrund (strain CVM19633).